Here is a 195-residue protein sequence, read N- to C-terminus: Putative Tricorn-like protease N-terminal subunit (195 aa).

Belongs to the peptidase S41B family.

The protein localises to the cytoplasm. In terms of biological role, degrades oligopeptides in a sequential manner. This chain is Putative Tricorn-like protease N-terminal subunit (triN), found in Sulfurisphaera tokodaii (strain DSM 16993 / JCM 10545 / NBRC 100140 / 7) (Sulfolobus tokodaii).